The primary structure comprises 3242 residues: tRNA nuclease CdiA (3242 aa).

An N-terminal signal peptide occupies residues 1–32 (MHQPPVRFTYRLLSYLISTIIAGQPLLPAVGA). Positions 36-322 (PQNGAGMDKA…AGGNLSVTGT (287 aa)) are two-partner system transport domain (TPS). Residues 351–1376 (GELTAGQNAM…IVVRTGHLLN (1026 aa)) are FHA-1. The receptor-binding domain (RBD) stretch occupies residues 1377 to 1668 (QREGFSATTT…TGQTGISDDW (292 aa)). The interval 1668 to 1852 (WPLPSGNNGY…LSPEDITLHN (185 aa)) is YP domain. The tract at residues 1853 to 1913 (GSVISGNNVQ…DLSAIGDISN (61 aa)) is periplasmic FHA-1 repeat (pFR). The interval 2021-2631 (DNSASSTTSQ…TSKYDSKQTS (611 aa)) is FHA-2. A compositionally biased stretch (basic and acidic residues) spans 2075–2091 (RESKNSRNGRSESHESH). Disordered stretches follow at residues 2075–2094 (RESKNSRNGRSESHESHAAV), 2310–2333 (GSSKTTHDRREAGTTQSQSASTIG), and 2439–2481 (TMAS…NAGN). Polar residues predominate over residues 2322-2333 (GTTQSQSASTIG). Positions 2969–3242 (GVDPSKLTED…IESALKGYGI (274 aa)) are DUF638-CT domain; not toxic when added to the outside of E.coli, does not interfere with F-pilus mediated conjugation, toxic when expressed intracellularly. A pre-toxin (PT) domain region spans residues 2972 to 3015 (PSKLTEDQKQTVSTLATLSAGMAGGIASGDVAGAAAGAGAGKNV). Positions 3016 to 3019 (VENN) match the VENN CT cleavage motif motif. Residues 3016–3097 (VENNALSLVA…KYLSSLHDKY (82 aa)) form a toxin import domain; sufficient to import the tRNA nuclease domain of colicin E5 into E.coli, may bind F-pili region. The CT domain; toxic when added to the outside of E.coli and when expressed intracellularly stretch occupies residues 3016-3242 (VENNALSLVA…IESALKGYGI (227 aa)). The tract at residues 3020–3141 (ALSLVARGCA…SENDPKQQNE (122 aa)) is inner membrane translocation domain (IMTD), targets protein to FtsH. Residues 3020–3242 (ALSLVARGCA…IESALKGYGI (223 aa)) are C-terminal effector domain (CT). The segment at 3098 to 3242 (GSGAASNPNI…IESALKGYGI (145 aa)) is tRNase function, does not interfere with F-pilus mediated conjugation. Positions 3116 to 3146 (KVELGGSGSGTGTPPPSENDPKQQNEKTVDK) are disordered. Basic and acidic residues predominate over residues 3134 to 3146 (NDPKQQNEKTVDK). The stretch at 3137–3238 (KQQNEKTVDK…AINKIESALK (102 aa)) forms a coiled coil. Residues Asp-3170, His-3193, and Glu-3196 contribute to the active site.

In the N-terminal section; belongs to the CdiA toxin family. The C-terminal (CT) domain interacts with cognate CdiI but not non-cognate CdiI from D.dadantii strain 3937. CdiA-CT also interacts with CysK; this is blocked upon preincubation with O-acetyl-L-serine. CysK forms a complex with CdiA-CT/CdiI. One CdiA toxin subunit binds to each subunit of the CysK homodimer, and one CdiI immunity protein binds to each toxin subunit; the immune complex is thus a dimer of trimers. The 4 C-terminal residues of CdiA fit into the active site of CysK. Requires a divalent metal cation as cofactor.

Its subcellular location is the secreted. The protein resides in the target cell membrane. It is found in the target cell. It localises to the target cell cytoplasm. Its function is as follows. Toxic component of a toxin-immunity protein module, which functions as a cellular contact-dependent growth inhibition (CDI) system. CDI modules allow bacteria to communicate with and inhibit the growth of closely related neighboring bacteria in a contact-dependent fashion (target cell counts decrease 100- to 1000-fold). CdiA toxicity is neutralized by its cognate immunity protein CdiI, but not by CdiI from other bacteria. Uses heterotrimeric OmpC and OmpF as target cell outer membrane receptors; receptor function depends on polymorphisms in extracellular loops L4 and L5 of OmpC; interacts with itself and closely related bacteria but also with OmpC from E.cloacae ATCC 13047. Its ability to preferentially bind to 'self' receptors suggests it may also play a role in self-recognition and kin selection. A bamA mutation that decreases its expression about 5-fold is partially resistant to this strain of CdiA, probably due to decreased outer membrane receptor protein assembly. Isolated CdiA-CT is imported in an F-pilus-mediated fashion; CdiA-CT inhibits F-mediated conjugation, probably via its N-terminus (residues 3016-3097), although it is not clear if this is physiologically significant. Gains access to the cytoplasm of target cells by using integral inner membrane protein FtsH. The C-terminal domain (CT) cleaves within tRNA anticodon loops; this activity is inhibited by cognate CdiI. tRNase activity of CdiA-CT is stimulated by CysK, although the extreme C-terminus (residues 3098-3242) has tRNase activity in the absence of CysK. In vivo CDI toxicity requires CysK. CysK stabilizes CdiA-CT, allowing it to bind tRNA substrate; neither CdiA-CT nor CysK bind tRNA alone in vitro. Purified CdiA-CT (residues 3016-3242) inhibits E.coli cell growth when added to cultures alone or in complex with cognate CdiI, growth is inhibited when cognate CdiI is present within the cell but not when a CdiA-CT/CdiI complex is added extracellularly, suggesting CdiA-CT alone but not the CdiA-CT/CdiI complex is imported into the target cell. In terms of biological role, the CdiA protein is thought to be exported from the cell through the central lumen of CdiB, the other half of its two-partner system (TPS). The TPS domain probably remains associated with CdiB while the FHA-1 domain forms an extended filament with the receptor-binding domain (RBD) at its extremity; in the secretion arrested state the C-terminus of the RBD and YP domains form a hairpin-like structure as the FHA-2, PT and CT domains are periplasmic. The YP domain is probably responsible for this arrest at the point where it re-enters the host cell periplasm. Upon binding to a target cell outer membrane receptor (heterotrimeric OmpC-OmpF for this CDI) a signal is transmitted to activate secretion. The filament elongates slightly, the rest of CdiA is secreted and the FHA-2 domain becomes stably associated with the target cell's outer membrane where it facilitates entry of the toxic CT domain into the target cell periplasm. From there the toxic CT domain is cleaved and gains access to the target cell cytoplasm via an inner membrane protein (FtsH for this CDI). The sequence is that of tRNA nuclease CdiA from Escherichia coli O6:K15:H31 (strain 536 / UPEC).